Reading from the N-terminus, the 263-residue chain is Gap junction beta-6 protein (263 aa).

Residues 1-19 (MDWGALQTILGGVNKHSTS) lie on the Cytoplasmic side of the membrane. The chain crosses the membrane as a helical span at residues 20–40 (IGKIWLTVLFIFRIMILVVAA). The Extracellular portion of the chain corresponds to 41–75 (ERVWGDEQDDFICNTLQPGCKNVCYDHFFPISHIR). A helical membrane pass occupies residues 76 to 96 (LWALQLIFVSTPALLVAMHVA). Over 97-137 (YRRHEKKRQFRKGDQKCEYKDIEEIRTQRFRIEGTLWWTYT) the chain is Cytoplasmic. Residues 138–158 (CSIFFRLVFEAVFMYAFYFMY) form a helical membrane-spanning segment. At 159-189 (DGFRMPRLMKCSAWPCPNTVDCFVSRPTEKT) the chain is on the extracellular side. Residues 190–210 (VFTIFMIAVSSICILLNVAEL) traverse the membrane as a helical segment. At 211–263 (CYLLTKFFLRRSRKAGNQKHHPNHENKEETKQNEMNELISDSCQNTVIGFTSS) the chain is on the cytoplasmic side.

It belongs to the connexin family. Beta-type (group I) subfamily. A connexon is composed of a hexamer of connexins. Exclusively expressed in the cochlea of the inner ear, where it is found in cells of the tegmentum vasculosum, cuboidal cells, supporting cells and clear cells.

It is found in the cell membrane. It localises to the cell junction. The protein localises to the gap junction. One gap junction consists of a cluster of closely packed pairs of transmembrane channels, the connexons, through which materials of low MW diffuse from one cell to a neighboring cell. This Gallus gallus (Chicken) protein is Gap junction beta-6 protein (GJB6).